Consider the following 27-residue polypeptide: Weak neurotoxin E3 (27 aa).

In terms of tissue distribution, expressed by the venom gland.

The protein resides in the secreted. Binds to muscle nicotinic acetylcholine receptor (nAChR) and inhibit acetylcholine from binding to the receptor, thereby impairing neuromuscular transmission. This is Weak neurotoxin E3 from Micrurus pyrrhocryptus (Coral snake).